The sequence spans 822 residues: Putative ESX-1 scaffolding and assembly protein SaeB (822 aa).

Functionally, may be involved in assembly of the ESX-1 / type VII specialized secretion system (T7SS), which exports several proteins including EsxA and EsxB. Involved in DNA conjugation in recipient (MDK8) but not donor (mc(2)155) strain. This Mycolicibacterium smegmatis (strain ATCC 700084 / mc(2)155) (Mycobacterium smegmatis) protein is Putative ESX-1 scaffolding and assembly protein SaeB.